Reading from the N-terminus, the 595-residue chain is uncharacterized protein (595 aa).

Residues 1–21 are disordered; the sequence is MSSQLKSTWAPVPSTKPSQPC. WD repeat units lie at residues 56 to 95, 100 to 143, 144 to 184, 187 to 226, 229 to 268, 313 to 352, 356 to 393, 433 to 472, 477 to 516, 520 to 559, and 564 to 594; these read EHTAPTTVARFSPSGYYVASGDNQGNVRIWDCAGEDKILK, AISG…GEIF, GHSS…FNRS, VHSKFVYDVRYSPNDERFASAGADGKVYVFDGKTGDQVYE, AHKGSIFSISWSPDSSQFVTSSAGYSCKIWDANTGSLIRE, GHQRSITAATLSPDATHFYTASYDGTVLSWDIGKQKAFPL, SHTNQVMQMIMADDHVITIGMDDTLRVIDIKQGCFAKD, KTIYQPSAVASHPLKSEFCVGGEDCCVYIHTLEKGELCEV, DSTAPITCLAYSPDGKYLACGDASGKVVLYDANSREVITS, FHTGRILGMSWNAKSTHLATASLDTNIHIYSVERPMKYIA, and HSLGATQVEWVSENELLSTGSDAAIKVWSVT.

Belongs to the WD repeat AIP1 family.

This is an uncharacterized protein from Schizosaccharomyces pombe (strain 972 / ATCC 24843) (Fission yeast).